The sequence spans 61 residues: Small ribosomal subunit protein bS21 (61 aa).

This sequence belongs to the bacterial ribosomal protein bS21 family.

In Leuconostoc mesenteroides subsp. mesenteroides (strain ATCC 8293 / DSM 20343 / BCRC 11652 / CCM 1803 / JCM 6124 / NCDO 523 / NBRC 100496 / NCIMB 8023 / NCTC 12954 / NRRL B-1118 / 37Y), this protein is Small ribosomal subunit protein bS21.